The primary structure comprises 479 residues: Probable cytosol aminopeptidase (479 aa).

Mn(2+)-binding residues include Lys247 and Asp252. The active site involves Lys259. Residues Asp270, Asp329, and Glu331 each coordinate Mn(2+). Arg333 is a catalytic residue.

Belongs to the peptidase M17 family. The cofactor is Mn(2+).

The protein localises to the cytoplasm. The enzyme catalyses Release of an N-terminal amino acid, Xaa-|-Yaa-, in which Xaa is preferably Leu, but may be other amino acids including Pro although not Arg or Lys, and Yaa may be Pro. Amino acid amides and methyl esters are also readily hydrolyzed, but rates on arylamides are exceedingly low.. It catalyses the reaction Release of an N-terminal amino acid, preferentially leucine, but not glutamic or aspartic acids.. Presumably involved in the processing and regular turnover of intracellular proteins. Catalyzes the removal of unsubstituted N-terminal amino acids from various peptides. The sequence is that of Probable cytosol aminopeptidase from Vesicomyosocius okutanii subsp. Calyptogena okutanii (strain HA).